Here is a 386-residue protein sequence, read N- to C-terminus: ATP synthase subunit a (386 aa).

Transmembrane regions (helical) follow at residues 150 to 170, 243 to 263, 270 to 290, and 310 to 330; these read FTNEVLYMLLTVVLVVFLFFV, HFLITLALSFSIFIGITIVGF, FFSFLLPAGVPLPLAPFLVLL, and MMAGHSLVKILSGFAWTMLFL.

It belongs to the ATPase A chain family. As to quaternary structure, F-type ATPases have 2 components, CF(1) - the catalytic core - and CF(0) - the membrane proton channel. CF(1) has five subunits: alpha(3), beta(3), gamma(1), delta(1), epsilon(1). CF(0) has three main subunits: a, b and c.

Its subcellular location is the mitochondrion inner membrane. Mitochondrial membrane ATP synthase (F(1)F(0) ATP synthase or Complex V) produces ATP from ADP in the presence of a proton gradient across the membrane which is generated by electron transport complexes of the respiratory chain. F-type ATPases consist of two structural domains, F(1) - containing the extramembraneous catalytic core and F(0) - containing the membrane proton channel, linked together by a central stalk and a peripheral stalk. During catalysis, ATP synthesis in the catalytic domain of F(1) is coupled via a rotary mechanism of the central stalk subunits to proton translocation. Key component of the proton channel; it may play a direct role in the translocation of protons across the membrane. The protein is ATP synthase subunit a (ATP6) of Triticum aestivum (Wheat).